We begin with the raw amino-acid sequence, 160 residues long: Ribonuclease P protein component 2 (160 aa).

It belongs to the eukaryotic/archaeal RNase P protein component 2 family. Consists of a catalytic RNA component and at least 4-5 protein subunits.

The protein localises to the cytoplasm. The enzyme catalyses Endonucleolytic cleavage of RNA, removing 5'-extranucleotides from tRNA precursor.. Functionally, part of ribonuclease P, a protein complex that generates mature tRNA molecules by cleaving their 5'-ends. In Methanosphaerula palustris (strain ATCC BAA-1556 / DSM 19958 / E1-9c), this protein is Ribonuclease P protein component 2.